The sequence spans 199 residues: Putative lectin L633 (199 aa).

A signal peptide spans 1 to 25 (MNILLLLMLLTSIILLVILIFLAYN). Residues 35–48 (CITPAPESQSISPD) show a composition bias toward polar residues. The tract at residues 35-74 (CITPAPESQSISPDQTTQLQTTTPVTSTPSNPTPTTIIPN) is disordered. Over residues 49–73 (QTTQLQTTTPVTSTPSNPTPTTIIP) the composition is skewed to low complexity. The 112-residue stretch at 84–195 (EIVSNGDNVL…LGQELWCATR (112 aa)) folds into the Bulb-type lectin domain. An N-linked (GlcNAc...) asparagine; by host glycan is attached at asparagine 121.

It localises to the secreted. The chain is Putative lectin L633 from Acanthamoeba polyphaga (Amoeba).